A 54-amino-acid polypeptide reads, in one-letter code: Califin-C (54 aa).

A disulfide bridge connects residues C25 and C53. L36 carries the post-translational modification Leucine amide.

Belongs to the molluscan ELH family. In terms of assembly, this protein consists of a large 36-residue subunit, bound by a single disulfide-bond to a small 18-residue subunit.

Its subcellular location is the secreted. Injected in sexually mature animals califin C excites LB and LC cells of the abdominal ganglion and cause egg-laying. The protein is Califin-C of Aplysia californica (California sea hare).